Consider the following 562-residue polypeptide: Delta-1-pyrroline-5-carboxylate dehydrogenase, mitochondrial (562 aa).

Residues 1 to 23 constitute a mitochondrion transit peptide; it reads MLPLPSLRRSLLSHAWRGAGLRW. Position 30 is an N6-succinyllysine (Lys-30). Ser-43 carries the post-translational modification Phosphoserine. Lys-51 is modified (N6-acetyllysine). Residues Lys-92, Lys-98, Lys-113, Lys-129, and Lys-174 each carry the N6-acetyllysine; alternate modification. N6-succinyllysine; alternate occurs at positions 92, 98, 113, 129, and 174. NAD(+) contacts are provided by residues Ser-207, Lys-232, and 285–289; that span reads GSVPT. The active-site Proton acceptor is Glu-313. Lys-317 bears the N6-acetyllysine mark. Lys-346 bears the N6-succinyllysine mark. The active-site Nucleophile is the Cys-347. Lys-357 is modified (N6-acetyllysine; alternate). Lys-357 is modified (N6-succinyllysine; alternate). An N6-acetyllysine mark is found at Lys-364 and Lys-375. Lys-394 is modified (N6-succinyllysine). Glu-446 contacts NAD(+). N6-acetyllysine is present on Lys-461. Lys-508 carries the post-translational modification N6-acetyllysine; alternate. An N6-succinyllysine; alternate modification is found at Lys-508. Ser-512 serves as a coordination point for substrate. 2 positions are modified to N6-acetyllysine: Lys-530 and Lys-551.

The protein belongs to the aldehyde dehydrogenase family. As to quaternary structure, homodimer. Post-translationally, acetylation of Lys-98, Lys-113 and Lys-401 is observed in liver mitochondria from fasted mice but not from fed mice.

Its subcellular location is the mitochondrion matrix. It catalyses the reaction L-glutamate 5-semialdehyde + NAD(+) + H2O = L-glutamate + NADH + 2 H(+). It functions in the pathway amino-acid degradation; L-proline degradation into L-glutamate; L-glutamate from L-proline: step 2/2. In terms of biological role, irreversible conversion of delta-1-pyrroline-5-carboxylate (P5C), derived either from proline or ornithine, to glutamate. This is a necessary step in the pathway interconnecting the urea and tricarboxylic acid cycles. The preferred substrate is glutamic gamma-semialdehyde, other substrates include succinic, glutaric and adipic semialdehydes. The polypeptide is Delta-1-pyrroline-5-carboxylate dehydrogenase, mitochondrial (Aldh4a1) (Mus musculus (Mouse)).